The chain runs to 201 residues: Small ribosomal subunit protein uS4c (201 aa).

Residues 89–150 enclose the S4 RNA-binding domain; it reads MRLDNIVFRL…RQKSQAIITK (62 aa).

Belongs to the universal ribosomal protein uS4 family. Part of the 30S ribosomal subunit. Contacts protein S5. The interaction surface between S4 and S5 is involved in control of translational fidelity.

It is found in the plastid. It localises to the chloroplast. Its function is as follows. One of the primary rRNA binding proteins, it binds directly to 16S rRNA where it nucleates assembly of the body of the 30S subunit. With S5 and S12 plays an important role in translational accuracy. The chain is Small ribosomal subunit protein uS4c (rps4) from Funaria hygrometrica (Moss).